Reading from the N-terminus, the 68-residue chain is MKTKDYVQELNGLTTEQLLNREKELKEQLFNLRFQLATGQLENTASLKTVRKNIARVKTVLRQQELNN.

This sequence belongs to the universal ribosomal protein uL29 family.

The sequence is that of Large ribosomal subunit protein uL29 from Limosilactobacillus fermentum (strain NBRC 3956 / LMG 18251) (Lactobacillus fermentum).